Consider the following 300-residue polypeptide: Protoheme IX farnesyltransferase (300 aa).

9 helical membrane passes run 28–48 (VVAL…PTIL), 50–70 (VQPL…AAAL), 100–120 (ALIF…VFTN), 122–142 (LTAW…TAYL), 149–169 (NIVI…TAVT), 176–196 (ALLL…ALAI), 222–242 (CILL…LVGM), 243–263 (SGPL…YKAW), and 280–300 (FSIY…YLWA).

The protein belongs to the UbiA prenyltransferase family. Protoheme IX farnesyltransferase subfamily.

The protein localises to the cell inner membrane. The catalysed reaction is heme b + (2E,6E)-farnesyl diphosphate + H2O = Fe(II)-heme o + diphosphate. The protein operates within porphyrin-containing compound metabolism; heme O biosynthesis; heme O from protoheme: step 1/1. Functionally, converts heme B (protoheme IX) to heme O by substitution of the vinyl group on carbon 2 of heme B porphyrin ring with a hydroxyethyl farnesyl side group. The protein is Protoheme IX farnesyltransferase of Shewanella oneidensis (strain ATCC 700550 / JCM 31522 / CIP 106686 / LMG 19005 / NCIMB 14063 / MR-1).